The sequence spans 257 residues: UPF0246 protein Lcho_2652 (257 aa).

Belongs to the UPF0246 family.

The chain is UPF0246 protein Lcho_2652 from Leptothrix cholodnii (strain ATCC 51168 / LMG 8142 / SP-6) (Leptothrix discophora (strain SP-6)).